A 60-amino-acid polypeptide reads, in one-letter code: Large ribosomal subunit protein bL32 (60 aa).

Belongs to the bacterial ribosomal protein bL32 family.

This Borrelia turicatae (strain 91E135) protein is Large ribosomal subunit protein bL32.